Reading from the N-terminus, the 232-residue chain is 2-C-methyl-D-erythritol 4-phosphate cytidylyltransferase (232 aa).

The protein belongs to the IspD/TarI cytidylyltransferase family. IspD subfamily.

It carries out the reaction 2-C-methyl-D-erythritol 4-phosphate + CTP + H(+) = 4-CDP-2-C-methyl-D-erythritol + diphosphate. Its pathway is isoprenoid biosynthesis; isopentenyl diphosphate biosynthesis via DXP pathway; isopentenyl diphosphate from 1-deoxy-D-xylulose 5-phosphate: step 2/6. Its function is as follows. Catalyzes the formation of 4-diphosphocytidyl-2-C-methyl-D-erythritol from CTP and 2-C-methyl-D-erythritol 4-phosphate (MEP). The chain is 2-C-methyl-D-erythritol 4-phosphate cytidylyltransferase from Rhodococcus erythropolis (strain PR4 / NBRC 100887).